A 663-amino-acid polypeptide reads, in one-letter code: UvrABC system protein B (663 aa).

In terms of domain architecture, Helicase ATP-binding spans 30 to 414 (EGIKAGKRHQ…IEHTDKMVEQ (385 aa)). Residue 43–50 (GATGTGKT) coordinates ATP. Residues 96 to 119 (YYDYYQPEAYVPSTDTFIEKDASI) carry the Beta-hairpin motif. A Helicase C-terminal domain is found at 434 to 600 (QIDDLLSEIQ…TINKKIHDLI (167 aa)). In terms of domain architecture, UVR spans 627-662 (QKTIDNIEKEMKQAAKDLDFEKATELRDMLFELKAE).

Belongs to the UvrB family. In terms of assembly, forms a heterotetramer with UvrA during the search for lesions. Interacts with UvrC in an incision complex.

Its subcellular location is the cytoplasm. The UvrABC repair system catalyzes the recognition and processing of DNA lesions. A damage recognition complex composed of 2 UvrA and 2 UvrB subunits scans DNA for abnormalities. Upon binding of the UvrA(2)B(2) complex to a putative damaged site, the DNA wraps around one UvrB monomer. DNA wrap is dependent on ATP binding by UvrB and probably causes local melting of the DNA helix, facilitating insertion of UvrB beta-hairpin between the DNA strands. Then UvrB probes one DNA strand for the presence of a lesion. If a lesion is found the UvrA subunits dissociate and the UvrB-DNA preincision complex is formed. This complex is subsequently bound by UvrC and the second UvrB is released. If no lesion is found, the DNA wraps around the other UvrB subunit that will check the other stand for damage. The protein is UvrABC system protein B of Staphylococcus aureus (strain MSSA476).